Consider the following 505-residue polypeptide: MKLGIIPYQEGTDIVYKNALQGQQEGKRPNLPQMEATHQIKSSVQGTSYEFVRTEDIPLNRRHFVYRPCSANPFFTILGYGCTEYPFDHSGMSVMDRSEGLSISRDGNDLVSVPDQYGWRTARSDVCIKEGMTYWEVEVIRGGNKKFADGVNNKENADDSVDEVQSGIYEKMHKQVNDTPHLRFGVCRREASLEAPVGFDVYGYGIRDISLESIHEGKLNCVLENGSPLKEGDKIGFLLSLPSIHTQIKQAKEFTKRRIFALNSHMDTMNEPWREDAENGPSRKKLKQETTNKEFQRALLEDIEYNDVVRDQIAIRYKNQLFFEATDYVKTTKPEYYSSDKRERQDYYQLEDSYLAIFQNGKYLGKAFENLKPLLPPFSELQYNEKFYLGYWQHGEARDESNDKNTTSAKKKKQQQKKKKGLILRNKYVNNNKLGYYPTISCFNGGTARIISEEDKLEYLDQIRSAYCVDGNSKVNTLDTLYKEQIAEDIVWDIIDELEQIALQQ.

Residues 70–295 enclose the B30.2/SPRY domain; that stretch reads SANPFFTILG…LKQETTNKEF (226 aa). Position 227 is a phosphoserine (S227). Residues 271 to 290 are disordered; the sequence is EPWREDAENGPSRKKLKQET. A DNA-binding site is contributed by K318. Residues 398-420 are disordered; the sequence is RDESNDKNTTSAKKKKQQQKKKK. A compositionally biased stretch (basic residues) spans 409–420; sequence AKKKKQQQKKKK.

This sequence belongs to the cclA family. As to quaternary structure, component of the Set1C/COMPASS complex which consists of SET1(2), BRE2(2), SPP1(2), SDC1(1), SHG1(1), SWD1(1), SWD2(1), and SWD3(1). Interacts directly with SDC1.

The protein resides in the nucleus. It is found in the chromosome. The protein localises to the telomere. Its function is as follows. Component of the Set1C/COMPASS complex that specifically mono-, di- and trimethylates histone H3 to form H3K4me1/2/3, which subsequently plays a role in telomere length maintenance and transcription elongation regulation. COMPASS recognizes ubiquitinated H2B on one face of the nucleosome which stimulates the methylation of H3 on the opposing face. The protein is COMPASS component BRE2 of Saccharomyces cerevisiae (strain ATCC 204508 / S288c) (Baker's yeast).